We begin with the raw amino-acid sequence, 488 residues long: Probable G-protein coupled receptor Mth-like 12 (488 aa).

The first 17 residues, M1–A17, serve as a signal peptide directing secretion. Topologically, residues K18–P215 are extracellular. N-linked (GlcNAc...) asparagine glycosylation is found at N19, N34, and N55. 5 disulfide bridges follow: C27-C81, C83-C88, C92-C189, C93-C104, and C155-C209. N-linked (GlcNAc...) asparagine glycosylation is present at N141. Residues G216 to L236 form a helical membrane-spanning segment. The Cytoplasmic segment spans residues S237–K247. The helical transmembrane segment at C248 to F268 threads the bilayer. Over R269–Y283 the chain is Extracellular. A helical transmembrane segment spans residues F284–F304. At T305–R315 the chain is on the cytoplasmic side. Residues F316 to S336 form a helical membrane-spanning segment. Residues M337 to H373 are Extracellular-facing. A glycan (N-linked (GlcNAc...) asparagine) is linked at N365. Residues I374–I394 traverse the membrane as a helical segment. At W395 to E416 the chain is on the cytoplasmic side. A helical transmembrane segment spans residues F417–L437. Over L438–T454 the chain is Extracellular. Residues I455–L475 form a helical membrane-spanning segment. Topologically, residues I476 to R488 are cytoplasmic.

It belongs to the G-protein coupled receptor 2 family. Mth subfamily.

It is found in the cell membrane. The sequence is that of Probable G-protein coupled receptor Mth-like 12 (mthl12) from Drosophila melanogaster (Fruit fly).